Reading from the N-terminus, the 790-residue chain is MKITSTSCICPVLVCLCFVQRCYGTTHHGSIRGTRNQTKHIEGETEVHHRPKRGWVWNQFFVLEEHMGPDPQYVGKLHSNSDKGDGSVKYILTGEGAGTIFIIDDTTGDIHSTKSLDREQKTHYVLHAQAIDRRTNKPLEPESEFIIKVQDINDNAPKFTDGPYIVTVPEMSDMGTSVLQVTATDADDPTYGNSARVVYSILQGQPYFSVDPKTGVIRTALHNMDREAREHYSVVIQAKDMAGQVGGLSGSTTVNITLTDVNDNPPRFPQKHYQLYVPESAQVGSAVGKIKANDADTGSNADMTYSIINGDGVGIFSISTDKETREGILSLKKPLNYEKKKSYTLNIEGANTHLDFRFSHLGPFKDATMLKIIVGDVDEPPLFSMPSYVMEVYENAKIGTVVGTVLAQDPDSANSLVRYFIDYNAEDDRFFNIDANTGTIKTTKVLDREETPWYNITVAASENDNPSLLSHVTVGIRVLDVNDNPPELAREYDIVVCENSKPGQVIHTISATDKDDFANGPRFNFFLDEHLSINPNFTLKDNEDNTASILTRRRRFSRTIQDVYYLPIMISDGGIPSLSSSSTLTIRVCACERDGRVRTCHAEAFLSSAGLSTGALIAILLCVVILLAIVVLFITLRRSKKEPLIISEEDVRENVVTYDDEGGGEEDTEAFDITALRNPSAAEELKYRRDIRPEVKLTPRHQTLSTLESIDVQEFIKQRLAEADLDPSVPPYDSLQTYAYEGQRSEAGSISSLDSATTQSDQDYQYLGDWGPEFKTLAELYGEIESERTT.

The signal sequence occupies residues 1–24; that stretch reads MKITSTSCICPVLVCLCFVQRCYG. The propeptide occupies 25-53; it reads TTHHGSIRGTRNQTKHIEGETEVHHRPKR. A glycan (N-linked (GlcNAc...) asparagine) is linked at Asn-36. 5 Cadherin domains span residues 54–159, 160–268, 269–383, 384–486, and 487–608; these read GWVW…APKF, TDGP…PPRF, PQKH…PPLF, SMPS…DNPP, and ELAR…FLSS. At 54–608 the chain is on the extracellular side; it reads GWVWNQFFVL…TCHAEAFLSS (555 aa). N-linked (GlcNAc...) asparagine glycosylation is present at Asn-255. Asn-455 and Asn-536 each carry an N-linked (GlcNAc...) asparagine glycan. A helical membrane pass occupies residues 609–636; it reads AGLSTGALIAILLCVVILLAIVVLFITL. Over 637–790 the chain is Cytoplasmic; that stretch reads RRSKKEPLII…YGEIESERTT (154 aa). Ser-786 is modified (phosphoserine).

The protein localises to the cell membrane. Cadherins are calcium-dependent cell adhesion proteins. They preferentially interact with themselves in a homophilic manner in connecting cells; cadherins may thus contribute to the sorting of heterogeneous cell types. The chain is Cadherin-18 (CDH18) from Bos taurus (Bovine).